The chain runs to 117 residues: UPF0251 protein DET0218 (117 aa).

The protein belongs to the UPF0251 family.

The chain is UPF0251 protein DET0218 from Dehalococcoides mccartyi (strain ATCC BAA-2266 / KCTC 15142 / 195) (Dehalococcoides ethenogenes (strain 195)).